The primary structure comprises 634 residues: Probable sulfate transporter 3.5 (634 aa).

The segment covering 1–12 (MENTITSSTSSP) has biased composition (polar residues). The tract at residues 1–25 (MENTITSSTSSPKGRGVNFSTPRGF) is disordered. The Cytoplasmic portion of the chain corresponds to 1–81 (MENTITSSTS…KYDMQKLKYD (81 aa)). The helical transmembrane segment at 82-102 (VLAGITITSLAVPQGISYAKL) threads the bilayer. Topologically, residues 103-104 (AS) are extracellular. The chain crosses the membrane as a helical span at residues 105–125 (IPPIIGLYSSFVPPFVYAVFG). The Cytoplasmic segment spans residues 126–130 (SSNNL). Residues 131–151 (AVGTVAACSLLIAETFGEEMI) form a helical membrane-spanning segment. The Extracellular portion of the chain corresponds to 152 to 158 (KNEPELY). A helical transmembrane segment spans residues 159 to 179 (LHLIFTATLITGLFQFAMGFL). The Cytoplasmic segment spans residues 180 to 195 (RLGILVDFLSHSTITG). The chain crosses the membrane as a helical span at residues 196 to 216 (FMGGTAIIILLQQLKGIFGLV). The Extracellular portion of the chain corresponds to 217 to 239 (HFTHKTDVVSVLHSILDNRAEWK). The helical transmembrane segment at 240-260 (WQSTLAGVCFLVFLQSTRYIK) threads the bilayer. Residues 261–265 (QRYPK) lie on the Cytoplasmic side of the membrane. Residues 266–286 (LFWVSAMGPMVVVVVGCVVAY) form a helical membrane-spanning segment. Residues 287–321 (LVKGTAHGIATVGPLKKGLNPPSIQLLNFDSKYLG) are Extracellular-facing. The chain crosses the membrane as a helical span at residues 322-342 (MVFKAGIVTGLIALAEGIAIG). Residues 343-358 (RSFAVMKNEQTDGNKE) are Cytoplasmic-facing. Residues 359-379 (MIAFGLMNVIGSFTSCYLTTG) form a helical membrane-spanning segment. Topologically, residues 380 to 395 (PFSKTAVNYNAGTKTP) are extracellular. A helical transmembrane segment spans residues 396 to 416 (MSNVVMGVCMMLVLLFLAPLF). The Cytoplasmic segment spans residues 417–420 (SYTP). The chain crosses the membrane as a helical span at residues 421 to 441 (LVGLSAIIMSAMLGLINYEEM). Residues 442 to 458 (YHLFKVDKFDFLVCMSA) are Extracellular-facing. Residues 459-479 (FFGVSFLSMDYGLIISVGFSI) form a helical membrane-spanning segment. Residues 480-634 (VRALLYVARP…FNLTTTKPEV (155 aa)) lie on the Cytoplasmic side of the membrane. An STAS domain is found at 508 to 623 (QYPASEEMLG…LSIDDAVQAC (116 aa)).

It belongs to the SLC26A/SulP transporter (TC 2.A.53) family.

The protein resides in the membrane. Functionally, h(+)/sulfate cotransporter that may play a role in the regulation of sulfate assimilation. The protein is Probable sulfate transporter 3.5 (SULTR3;5) of Arabidopsis thaliana (Mouse-ear cress).